Reading from the N-terminus, the 391-residue chain is Zinc finger protein DPF3 (391 aa).

The segment covering 152 to 165 (ENGDGFHDDEDFEV) has biased composition (acidic residues). Disordered regions lie at residues 152–200 (ENGD…PYVC) and 236–266 (LAEE…QKAP). Residues 169 to 183 (KRKHRNKGRGRGSGR) are compositionally biased toward basic residues. The segment at 198–235 (YVCDNRYKQKHNSKTADSVCGKRYKNRPGLSYHYAHTH) adopts a C2H2-type zinc-finger fold. PHD-type zinc fingers lie at residues 273-333 (NDYC…CKSC) and 330-380 (CKSC…CQNL).

In terms of assembly, component of the BAF complex. Interacts with acetylated histones H3 and H4. Component of neuron-specific chromatin remodeling complex (nBAF complex), a subfamily of ATP-dependent SWI/SNF chromatin remodeling complexes. Expressed in the heart and somites.

It localises to the nucleus. Functionally, muscle-specific component of the BAF complex, a multiprotein complex involved in transcriptional activation and repression of select genes by chromatin remodeling (alteration of DNA-nucleosome topology). Specifically binds acetylated lysines on histone 3 and 4. In the complex, it acts as a tissue-specific anchor between histone acetylations and methylations and chromatin remodeling. Belongs to the neuron-specific chromatin remodeling complex (nBAF complex) and may play a role in neural development. Plays an essential role in heart and skeletal muscle development. This Danio rerio (Zebrafish) protein is Zinc finger protein DPF3 (dpf3).